The sequence spans 317 residues: 4-hydroxy-3-methylbut-2-enyl diphosphate reductase (317 aa).

Residue Cys-12 participates in [4Fe-4S] cluster binding. (2E)-4-hydroxy-3-methylbut-2-enyl diphosphate-binding residues include His-41 and His-74. Positions 41 and 74 each coordinate dimethylallyl diphosphate. Isopentenyl diphosphate is bound by residues His-41 and His-74. Position 96 (Cys-96) interacts with [4Fe-4S] cluster. A (2E)-4-hydroxy-3-methylbut-2-enyl diphosphate-binding site is contributed by His-124. Position 124 (His-124) interacts with dimethylallyl diphosphate. His-124 provides a ligand contact to isopentenyl diphosphate. Residue Glu-126 is the Proton donor of the active site. Thr-169 is a binding site for (2E)-4-hydroxy-3-methylbut-2-enyl diphosphate. Cys-199 is a [4Fe-4S] cluster binding site. Positions 227, 228, 229, and 271 each coordinate (2E)-4-hydroxy-3-methylbut-2-enyl diphosphate. Residues Ser-227, Ser-228, Asn-229, and Ser-271 each coordinate dimethylallyl diphosphate. The isopentenyl diphosphate site is built by Ser-227, Ser-228, Asn-229, and Ser-271.

It belongs to the IspH family. [4Fe-4S] cluster is required as a cofactor.

The enzyme catalyses isopentenyl diphosphate + 2 oxidized [2Fe-2S]-[ferredoxin] + H2O = (2E)-4-hydroxy-3-methylbut-2-enyl diphosphate + 2 reduced [2Fe-2S]-[ferredoxin] + 2 H(+). It carries out the reaction dimethylallyl diphosphate + 2 oxidized [2Fe-2S]-[ferredoxin] + H2O = (2E)-4-hydroxy-3-methylbut-2-enyl diphosphate + 2 reduced [2Fe-2S]-[ferredoxin] + 2 H(+). The protein operates within isoprenoid biosynthesis; dimethylallyl diphosphate biosynthesis; dimethylallyl diphosphate from (2E)-4-hydroxy-3-methylbutenyl diphosphate: step 1/1. It functions in the pathway isoprenoid biosynthesis; isopentenyl diphosphate biosynthesis via DXP pathway; isopentenyl diphosphate from 1-deoxy-D-xylulose 5-phosphate: step 6/6. Its function is as follows. Catalyzes the conversion of 1-hydroxy-2-methyl-2-(E)-butenyl 4-diphosphate (HMBPP) into a mixture of isopentenyl diphosphate (IPP) and dimethylallyl diphosphate (DMAPP). Acts in the terminal step of the DOXP/MEP pathway for isoprenoid precursor biosynthesis. The sequence is that of 4-hydroxy-3-methylbut-2-enyl diphosphate reductase from Vibrio parahaemolyticus serotype O3:K6 (strain RIMD 2210633).